Reading from the N-terminus, the 317-residue chain is L-lactate dehydrogenase (317 aa).

NAD(+)-binding positions include valine 16, aspartate 37, lysine 42, tyrosine 68, and 82–83 (GA). Residues glutamine 85 and arginine 91 each coordinate substrate. Residues threonine 104, 121 to 123 (ATN), and serine 146 each bind NAD(+). Position 123 to 126 (123 to 126 (NPVD)) interacts with substrate. 151–154 (DTAR) lines the substrate pocket. Positions 156 and 171 each coordinate beta-D-fructose 1,6-bisphosphate. The active-site Proton acceptor is the histidine 178. A Phosphotyrosine modification is found at tyrosine 222. Threonine 231 serves as a coordination point for substrate.

It belongs to the LDH/MDH superfamily. LDH family. Homotetramer.

It is found in the cytoplasm. The enzyme catalyses (S)-lactate + NAD(+) = pyruvate + NADH + H(+). It functions in the pathway fermentation; pyruvate fermentation to lactate; (S)-lactate from pyruvate: step 1/1. Its activity is regulated as follows. Allosterically activated by fructose 1,6-bisphosphate (FBP). Its function is as follows. Catalyzes the conversion of lactate to pyruvate. The protein is L-lactate dehydrogenase of Corynebacterium efficiens (strain DSM 44549 / YS-314 / AJ 12310 / JCM 11189 / NBRC 100395).